Here is a 419-residue protein sequence, read N- to C-terminus: Adenylosuccinate synthetase (419 aa).

Residues 12–18 (GDEGKGK) and 40–42 (GHT) each bind GTP. D13 acts as the Proton acceptor in catalysis. Residues D13 and G40 each coordinate Mg(2+). Residues 13–16 (DEGK), 38–41 (NAGH), T128, R142, Q220, T235, and R299 contribute to the IMP site. H41 serves as the catalytic Proton donor. 295 to 301 (SITKRPR) contacts substrate. GTP is bound by residues R301, 327–329 (KSD), and 407–409 (SLG).

It belongs to the adenylosuccinate synthetase family. As to quaternary structure, homodimer. Requires Mg(2+) as cofactor.

It is found in the cytoplasm. The enzyme catalyses IMP + L-aspartate + GTP = N(6)-(1,2-dicarboxyethyl)-AMP + GDP + phosphate + 2 H(+). Its pathway is purine metabolism; AMP biosynthesis via de novo pathway; AMP from IMP: step 1/2. Functionally, plays an important role in the de novo pathway of purine nucleotide biosynthesis. Catalyzes the first committed step in the biosynthesis of AMP from IMP. The sequence is that of Adenylosuccinate synthetase from Azobacteroides pseudotrichonymphae genomovar. CFP2.